Reading from the N-terminus, the 161-residue chain is Phosphopantetheine adenylyltransferase (161 aa).

Ser-9 is a substrate binding site. ATP-binding positions include 9-10 (SF) and His-17. Substrate is bound by residues Lys-41, Leu-73, and Lys-87. ATP contacts are provided by residues 88-90 (GLR), Glu-98, and 122-128 (FSFLSSS).

This sequence belongs to the bacterial CoaD family. As to quaternary structure, homohexamer. Mg(2+) serves as cofactor.

Its subcellular location is the cytoplasm. The catalysed reaction is (R)-4'-phosphopantetheine + ATP + H(+) = 3'-dephospho-CoA + diphosphate. Its pathway is cofactor biosynthesis; coenzyme A biosynthesis; CoA from (R)-pantothenate: step 4/5. In terms of biological role, reversibly transfers an adenylyl group from ATP to 4'-phosphopantetheine, yielding dephospho-CoA (dPCoA) and pyrophosphate. This chain is Phosphopantetheine adenylyltransferase, found in Nocardia farcinica (strain IFM 10152).